Reading from the N-terminus, the 225-residue chain is MSENERGTQLTEEEKEELQRGEKGAIIELLVPLENYLSAGVHIGTHTCTRYMERFIYRVRPEGLYVLDVRKIDERLRVAAKFLSRFQPQSILAVASRPYAFTPVQKFAEVVGARAVVGRMVPGMLTNPYLEDFIEPEVLLVSDPRTDTQAIKEAADMGIPVVAFSDTDAKVDYVDLVIPSNNKGRKSLALLYWALARQILRERKEIAPDADIPVKVEEFEVKLSQ.

It belongs to the universal ribosomal protein uS2 family.

This chain is Small ribosomal subunit protein uS2, found in Metallosphaera sedula (strain ATCC 51363 / DSM 5348 / JCM 9185 / NBRC 15509 / TH2).